The chain runs to 184 residues: Large ribosomal subunit protein uL6 (184 aa).

Belongs to the universal ribosomal protein uL6 family. Part of the 50S ribosomal subunit.

Functionally, this protein binds to the 23S rRNA, and is important in its secondary structure. It is located near the subunit interface in the base of the L7/L12 stalk, and near the tRNA binding site of the peptidyltransferase center. This is Large ribosomal subunit protein uL6 from Desulfurococcus amylolyticus (strain DSM 18924 / JCM 16383 / VKM B-2413 / 1221n) (Desulfurococcus kamchatkensis).